A 205-amino-acid chain; its full sequence is IQ domain-containing protein F1 (205 aa).

Composition is skewed to basic and acidic residues over residues 1 to 24 (MEEK…KEMP) and 51 to 68 (ANEK…LSDK). The segment at 1-68 (MEEKQPQKTK…PENQKKLSDK (68 aa)) is disordered. IQ domains are found at residues 68–97 (KDTV…SACI) and 124–153 (KEWA…AVRI).

As to quaternary structure, interacts with calmodulin.

It is found in the cytoplasmic vesicle. Its subcellular location is the secretory vesicle. The protein localises to the acrosome. Functionally, involved in sperm capacitation and acrosome reaction. The sequence is that of IQ domain-containing protein F1 from Homo sapiens (Human).